Consider the following 544-residue polypeptide: Cytochrome P450 monooxygenase tenB (544 aa).

Residues L13 to W33 traverse the membrane as a helical segment. Residues F438–K448 show a composition bias toward basic and acidic residues. A disordered region spans residues F438–D467. Residue C486 participates in heme binding.

The protein belongs to the cytochrome P450 family. It depends on heme as a cofactor.

The protein localises to the membrane. It participates in secondary metabolite biosynthesis. Its function is as follows. Cytochrome P450 monooxygenase; part of the gene cluster that mediates the biosynthesis of tenellin-type 2-pyridones, iron-chelating compounds involved in iron stress tolerance, competition with the natural competitor fungus Metarhizium robertsii and insect hosts infection. TenB catalyzes the selective N-hydroxylation of the 2-pyridone nitrogen of yield tellinin and 15-hydroxytellenin (15-HT), respectively. The pathway begins with the assembly of the polyketide-amino acid backbone by the hybrid PKS-NRPS tenS with the help of the enoyl reductase tenC. These enzymes catalyze the synthesis of the pyrrolidine-2-dione intermediates pretellinin A, 11-hydropretellenin A, 12-hydropretellenin A, 13-hydropretellenin A, 14-hydropretellenin A, 12-oxopretellenin A and prototellinin D. The cytochrome P450 monooxygenase tenA then catalyzes an oxidative ring expansion of pretenellin A and 14-hydropretellenin A to form the 2-pyridone core, leading to pretenellin B and pyridovericin, respectively. The cytochrome P450 monooxygenase tenB is then required for the selective N-hydroxylation of the 2-pyridone nitrogen of yield tellinin and 15-hydroxytellenin (15-HT), respectively. The UDP-glucosyltransferase GT1 and the methyltransferase MT1, located outside the tenS gene cluster, contribute to the stepwise glycosylation and methylation of 15-HT to obtain the glycoside pyridovericin-N-O-(4-O-methyl-beta-D-glucopyranoside) (PMGP). Additional related compounds such as 1-O-methyl-15-HT, (8Z)-1-O-methyl-15-HT, and O-methyltenellin A are also produced but the enzymes involved in their biosynthesis have still to be determined. The protein is Cytochrome P450 monooxygenase tenB of Beauveria bassiana (strain ARSEF 2860) (White muscardine disease fungus).